Reading from the N-terminus, the 176-residue chain is NAD(P)H-quinone oxidoreductase subunit J (176 aa).

Residues 1-32 (MEKEGLAKSSDTSIKKEGFISQSLSKDGIPNQ) form a disordered region. Residues 20-32 (ISQSLSKDGIPNQ) are compositionally biased toward polar residues.

The protein belongs to the complex I 30 kDa subunit family. As to quaternary structure, NDH-1 can be composed of about 15 different subunits; different subcomplexes with different compositions have been identified which probably have different functions.

Its subcellular location is the cellular thylakoid membrane. It catalyses the reaction a plastoquinone + NADH + (n+1) H(+)(in) = a plastoquinol + NAD(+) + n H(+)(out). The enzyme catalyses a plastoquinone + NADPH + (n+1) H(+)(in) = a plastoquinol + NADP(+) + n H(+)(out). Functionally, NDH-1 shuttles electrons from an unknown electron donor, via FMN and iron-sulfur (Fe-S) centers, to quinones in the respiratory and/or the photosynthetic chain. The immediate electron acceptor for the enzyme in this species is believed to be plastoquinone. Couples the redox reaction to proton translocation, and thus conserves the redox energy in a proton gradient. Cyanobacterial NDH-1 also plays a role in inorganic carbon-concentration. The sequence is that of NAD(P)H-quinone oxidoreductase subunit J from Prochlorococcus marinus (strain MIT 9215).